The following is a 353-amino-acid chain: Putative glycosyltransferase TagX (353 aa).

Belongs to the glycosyltransferase 2 family.

This chain is Putative glycosyltransferase TagX (tagX), found in Staphylococcus aureus (strain MSSA476).